The chain runs to 529 residues: Tyrosine--tRNA ligase, cytoplasmic (529 aa).

Tyr-39 is an L-tyrosine binding site. The 'HIGH' region motif lies at 44 to 52; it reads TTGKPHVAY. 4 residues coordinate L-tyrosine: Tyr-166, Gln-170, Asp-173, and Gln-188. Positions 222-226 match the 'KMSKS' region motif; that stretch reads KMSSS. A Nuclear localization signal motif is present at residues 242 to 247; that stretch reads KKKLKK. A disordered region spans residues 335 to 362; the sequence is KLTSSAYPEPSKNKGGVKGNPKQTTDDD. The 105-residue stretch at 365–469 folds into the tRNA-binding domain; that stretch reads IPSRLDIRVG…EGSAAGDRVY (105 aa).

It belongs to the class-I aminoacyl-tRNA synthetase family. Homodimer.

It is found in the cytoplasm. Its subcellular location is the nucleus. The enzyme catalyses tRNA(Tyr) + L-tyrosine + ATP = L-tyrosyl-tRNA(Tyr) + AMP + diphosphate + H(+). Catalyzes the attachment of tyrosine to tRNA(Tyr) in a two-step reaction: tyrosine is first activated by ATP to form Tyr-AMP and then transferred to the acceptor end of tRNA(Tyr). This is Tyrosine--tRNA ligase, cytoplasmic (yars1) from Danio rerio (Zebrafish).